The primary structure comprises 246 residues: Sulfate transporter CysZ (246 aa).

Helical transmembrane passes span 24–44 (LFVL…IGFA), 69–89 (IVWP…FTMV), 148–168 (LLVL…WILF), and 214–234 (LLIP…ATLF).

Belongs to the CysZ family.

Its subcellular location is the cell inner membrane. In terms of biological role, high affinity, high specificity proton-dependent sulfate transporter, which mediates sulfate uptake. Provides the sulfur source for the cysteine synthesis pathway. This is Sulfate transporter CysZ from Pseudomonas aeruginosa (strain LESB58).